Reading from the N-terminus, the 424-residue chain is MRPLFIRNASQLVTLAGSSTAPLVKEKMNELHIIENGSVWVEDGKIAAVGTDEELSQQFQERIAEAEIVDATGKTVTPGLVDPHTHFVYAGSRESEFAMRLSGATYMEIMNAGGGIHATTKATREASKETLYEESKRRLDQFLLHGVTTVEAKSGYGLSIEHEVKQLTVAKQLDETHPVDVVSTFMGAHAVPAEWKDNPDGFVRVIVEEMIPKVSELGLAEFNDVFCERGVFTPEQARIILEAGKAYGLMPKIHADEIEPYGGAELAAEVGAVSADHLLRASDEGIRRMAEKGVIAVLLPGTAFFLMTKAANARKIIDAGAAVALSTDCNPGSSPTVSLPLIMNLGCLQMGMTPAEALAAVTINAAHAINRGHEIGSIEVGKKADLVLFDVPNYMQLIYHYGMNHTDTVVKNGRVVVKSGRLCY.

Fe(3+) is bound by residues histidine 84 and histidine 86. Zn(2+) is bound by residues histidine 84 and histidine 86. Residues arginine 93, tyrosine 156, and histidine 189 each contribute to the 4-imidazolone-5-propanoate site. Tyrosine 156 serves as a coordination point for N-formimidoyl-L-glutamate. A Fe(3+)-binding site is contributed by histidine 254. Residue histidine 254 coordinates Zn(2+). Glutamate 257 contacts 4-imidazolone-5-propanoate. Aspartate 328 serves as a coordination point for Fe(3+). Residue aspartate 328 coordinates Zn(2+). Positions 330 and 332 each coordinate N-formimidoyl-L-glutamate. 4-imidazolone-5-propanoate is bound at residue serine 333.

Belongs to the metallo-dependent hydrolases superfamily. HutI family. It depends on Zn(2+) as a cofactor. Fe(3+) is required as a cofactor.

It localises to the cytoplasm. It carries out the reaction 4-imidazolone-5-propanoate + H2O = N-formimidoyl-L-glutamate. It participates in amino-acid degradation; L-histidine degradation into L-glutamate; N-formimidoyl-L-glutamate from L-histidine: step 3/3. Catalyzes the hydrolytic cleavage of the carbon-nitrogen bond in imidazolone-5-propanoate to yield N-formimidoyl-L-glutamate. It is the third step in the universal histidine degradation pathway. In Geobacillus sp. (strain WCH70), this protein is Imidazolonepropionase.